We begin with the raw amino-acid sequence, 176 residues long: Shikimate kinase (176 aa).

12–17 (GSGKST) is a binding site for ATP. Ser16 serves as a coordination point for Mg(2+). Residues Asp34, Arg58, and Gly80 each contribute to the substrate site. Arg117 contacts ATP. Arg136 serves as a coordination point for substrate. Residue Arg153 coordinates ATP.

Belongs to the shikimate kinase family. As to quaternary structure, monomer. Mg(2+) serves as cofactor.

The protein localises to the cytoplasm. The catalysed reaction is shikimate + ATP = 3-phosphoshikimate + ADP + H(+). The protein operates within metabolic intermediate biosynthesis; chorismate biosynthesis; chorismate from D-erythrose 4-phosphate and phosphoenolpyruvate: step 5/7. In terms of biological role, catalyzes the specific phosphorylation of the 3-hydroxyl group of shikimic acid using ATP as a cosubstrate. The polypeptide is Shikimate kinase (Mycobacterium bovis (strain ATCC BAA-935 / AF2122/97)).